The chain runs to 861 residues: MISEENFQQHTPMMQQYLKLKAENPDTLLFYRMGDFYELFYDDAKKAAALLDISLTKRGQSAGQPIPMAGMPYHAVEGYLAKLVQLGESVAICEQIGDPATSKGPVERQIVRIVTPGTVSDEALLPERQDNLIAAVYQEKEKFGLATLDMTSGRFQLCEPADKETLRAELQRIVPVELLYCEEFNEMAAIEHCKGLRRRPIWEFELSTAITLLNRQFGTKDLRAFGVEKSPLGLSAAGCLLQYAKETQRTALPHIQSISLIQNQDCIQLDAATRRNLELTQNLSGGTENTLASVLDKCVTPMGSRLLKRWIHQPIRDVEKLKQRQQAIAEILNFDLVDELQPYLQLVGDMERILARVALRSARPRDLTRLRTALEQIPALRTIVQQKTPPFLTALFSQIADFSEQCDLLQRALIETPPLLIRDGGVIAEGYNTELDEWRMLSDGATQYLENLEKRERESTGIDTLKIGFNAVHGYYIQISQGQAHKAPIHYVRRQTLKNAERYIIPELKEYEDKVLKSKGAALALEKQLYDELFDLLLPHLGALQLASLALSELDVLVNLAERADTLNYVMPTFCDEVSVKIENGRHPVVEQVLKDPFIANPVELNHNRHLLIITGPNMGGKSTYMRQTALITLLAYIGSFVPADSARIGPIDRIFTRIGASDDLASGRSTFMVEMTEMANILHQATEQSLVLIDEIGRGTSTYDGLSLAWACAEWLAKKIRSLTLFATHYFELTALPEQLEGIVNIHLDALEHNNSIAFMHAVQDGAASKSYGLAVAALAGVPQSVIKLAKQKLTQLEKNSSHSADQQIQALREANHNQGELLFEQETDALREAIEKLDPDDLSPKQALAYLYQLKKMVG.

616–623 (GPNMGGKS) provides a ligand contact to ATP.

This sequence belongs to the DNA mismatch repair MutS family.

In terms of biological role, this protein is involved in the repair of mismatches in DNA. It is possible that it carries out the mismatch recognition step. This protein has a weak ATPase activity. The polypeptide is DNA mismatch repair protein MutS (Haemophilus influenzae (strain PittEE)).